Here is a 223-residue protein sequence, read N- to C-terminus: Putative 3-methyladenine DNA glycosylase (223 aa).

It belongs to the DNA glycosylase MPG family.

This is Putative 3-methyladenine DNA glycosylase from Pseudomonas savastanoi pv. phaseolicola (strain 1448A / Race 6) (Pseudomonas syringae pv. phaseolicola (strain 1448A / Race 6)).